Reading from the N-terminus, the 380-residue chain is Phospho-N-acetylmuramoyl-pentapeptide-transferase (380 aa).

11 helical membrane passes run 26 to 46, 75 to 95, 98 to 118, 135 to 155, 160 to 180, 183 to 203, 222 to 242, 259 to 279, 283 to 303, 311 to 331, and 357 to 377; these read IVAA…LFIE, MGGA…ADLG, LVWA…WDDW, LVLQ…DWQP, GFPF…PFVP, LFSP…VVAT, IVSS…IAGF, LGVF…YNTY, VFMG…LAVL, AILH…VWSF, and KIIV…LMSL.

This sequence belongs to the glycosyltransferase 4 family. MraY subfamily. Mg(2+) is required as a cofactor.

The protein localises to the cell inner membrane. The enzyme catalyses UDP-N-acetyl-alpha-D-muramoyl-L-alanyl-gamma-D-glutamyl-meso-2,6-diaminopimeloyl-D-alanyl-D-alanine + di-trans,octa-cis-undecaprenyl phosphate = di-trans,octa-cis-undecaprenyl diphospho-N-acetyl-alpha-D-muramoyl-L-alanyl-D-glutamyl-meso-2,6-diaminopimeloyl-D-alanyl-D-alanine + UMP. Its pathway is cell wall biogenesis; peptidoglycan biosynthesis. Its function is as follows. Catalyzes the initial step of the lipid cycle reactions in the biosynthesis of the cell wall peptidoglycan: transfers peptidoglycan precursor phospho-MurNAc-pentapeptide from UDP-MurNAc-pentapeptide onto the lipid carrier undecaprenyl phosphate, yielding undecaprenyl-pyrophosphoryl-MurNAc-pentapeptide, known as lipid I. The protein is Phospho-N-acetylmuramoyl-pentapeptide-transferase of Anaeromyxobacter sp. (strain Fw109-5).